The chain runs to 695 residues: Elongation factor G 1 (695 aa).

The tr-type G domain occupies 6 to 281 (TRYRNIGIFA…AVVDYLPNPK (276 aa)). GTP is bound by residues 15-22 (AHVDAGKT), 79-83 (DTPGH), and 133-136 (NKLD).

The protein belongs to the TRAFAC class translation factor GTPase superfamily. Classic translation factor GTPase family. EF-G/EF-2 subfamily.

The protein resides in the cytoplasm. Catalyzes the GTP-dependent ribosomal translocation step during translation elongation. During this step, the ribosome changes from the pre-translocational (PRE) to the post-translocational (POST) state as the newly formed A-site-bound peptidyl-tRNA and P-site-bound deacylated tRNA move to the P and E sites, respectively. Catalyzes the coordinated movement of the two tRNA molecules, the mRNA and conformational changes in the ribosome. The polypeptide is Elongation factor G 1 (fusA) (Synechocystis sp. (strain ATCC 27184 / PCC 6803 / Kazusa)).